Reading from the N-terminus, the 75-residue chain is DNA-directed RNA polymerase subunit omega (75 aa).

It belongs to the RNA polymerase subunit omega family. In cyanobacteria the RNAP catalytic core is composed of 2 alpha, 1 beta, 1 beta', 1 gamma and 1 omega subunit. When a sigma factor is associated with the core the holoenzyme is formed, which can initiate transcription.

It catalyses the reaction RNA(n) + a ribonucleoside 5'-triphosphate = RNA(n+1) + diphosphate. Its function is as follows. Promotes RNA polymerase assembly. Latches the N- and C-terminal regions of the beta' subunit thereby facilitating its interaction with the beta and alpha subunits. The chain is DNA-directed RNA polymerase subunit omega from Prochlorococcus marinus (strain MIT 9211).